The chain runs to 506 residues: Cytochrome P450 monooxygenase TES1 (506 aa).

Residues Met26–Phe46 traverse the membrane as a helical segment. 4 N-linked (GlcNAc...) asparagine glycosylation sites follow: Asn167, Asn201, Asn298, and Asn427. Heme is bound at residue Cys440.

The protein belongs to the cytochrome P450 family. The cofactor is heme.

It is found in the membrane. Its pathway is phytotoxin biosynthesis. Functionally, cytochrome P450 monooxygenase; part of the gene cluster that mediates the biosynthesis of the phytotoxin tentoxin, an inhibitor the F1-ATPase activity of chloroplasts, resulting in chlorosis in sensitive plants. Tentoxin is a cyclic tetrapeptide that consists of four amino acid residues: glycine (Gly), alanine (Ala), leucine (Leu), and dehydrophenylalanine (DPhe). In addition, both the Ala and DPhe residues are N-methylated. The nonribosomal peptide synthetase TES assembles tentoxin from the four substrate amino acids. The adenylation domains of each of the 4 modules are responsible for the activation of Gly, Ala, Leu and DPhe, respectively. In addition, the N-methyltransferase domains in the second and fourth modules of TES could be responsible for N-methylation of Ala and DPhe residues. Finally, the condensation domain located in the termination module probably catalyzes the formation of the intramolecular macrocyclization and then the release of tentoxin. The cytochrome P450 monooxygenase TES1 is predicted to be involved in the formation of DPhe. The polypeptide is Cytochrome P450 monooxygenase TES1 (Alternaria alternata (Alternaria rot fungus)).